The following is a 262-amino-acid chain: Virulence regulon transcriptional activator VirF (262 aa).

One can recognise an HTH araC/xylS-type domain in the interval 161–258; that stretch reads DQIRKIVEKN…GITPKKFYLY (98 aa). 2 consecutive DNA-binding regions (H-T-H motif) follow at residues 178-199 and 225-248; these read SDIS…ESEK and INDV…NEYY.

In terms of assembly, homodimer.

Primary regulator of plasmid-encoded virulence genes. Activates the transcription of icsA (virG) and of virB, which is an activator of the ipaABCD virulence regulon. The protein is Virulence regulon transcriptional activator VirF (virF) of Shigella dysenteriae.